The chain runs to 702 residues: Dynein intermediate chain 2, ciliary (702 aa).

A compositionally biased stretch (low complexity) spans 1–11 (MPVKSTKTKGG). 3 disordered regions span residues 1–64 (MPVK…IKPD), 128–226 (DEAR…FSST), and 243–272 (QEKA…ETQS). Basic and acidic residues-rich tracts occupy residues 36–52 (GKKD…HGGE) and 152–176 (GEEK…RDEE). Positions 189 to 206 (KLTNQFNFSERASQTYNN) are enriched in polar residues. The span at 243-261 (QEKAKEKKAAPSKKDDDKS) shows a compositional bias: basic and acidic residues. WD repeat units follow at residues 380 to 420 (PTDS…ANPV), 429 to 472 (KHTD…LTYT), 490 to 533 (TQLT…QFLD), 537 to 577 (AHHM…GPMF), 580 to 620 (DLGS…YEPI), and 628 to 667 (KKKT…RKVP).

Belongs to the dynein intermediate chain family. As to quaternary structure, consists of at least two heavy chains (alpha and beta), three intermediate chains and several light chains.

The protein resides in the cytoplasm. The protein localises to the cytoskeleton. Its subcellular location is the cilium axoneme. Functionally, microtubule-binding protein that may be involved in dynein outer arm assembly on the axoneme. The polypeptide is Dynein intermediate chain 2, ciliary (Heliocidaris crassispina (Sea urchin)).